The sequence spans 627 residues: Protein fem-1 homolog B (627 aa).

4 ANK repeats span residues 45 to 74, 87 to 116, 120 to 149, and 153 to 182; these read QRSTPLIIAARNGHAKVVRLLLEHYRVQTQ, DGATALWCAAGAGHFEVVKLLVSHGANVNH, TNSTPLRAACFDGRLDIVKYLVENNANISI, and YDNTCLMIAAYKGHTDVVRYLLEQRADPNA. Residues H185, C186, and H218 each contribute to the Zn(2+) site. ANK repeat units follow at residues 186–215 and 218–248; these read CGATALHFAAEAGHIDIVKELIKWRAAIVV and HGMTPLKVAAESCKADVVELLLSHADCDRRS. A TPR repeat occupies 344–377; sequence SHPIIYRGAVYADNMEFEQCIKLWLHALHLRQKG. 2 ANK repeats span residues 483 to 527 and 531 to 568; these read EGFS…EVNA and EGNSALHIIVQYNRPISDFLTLHSIIISLVEAGAHTDM.

Belongs to the fem-1 family. Component of a CRL2 E3 ubiquitin-protein ligase complex, also named ECS (Elongin BC-CUL2/5-SOCS-box protein) complex, composed of CUL2, Elongin BC (ELOB and ELOC), RBX1 and substrate-specific adapter FEM1B. Homooligomer. Interacts with PPM1F and PHTF1. Interacts with the death domain of FAS/TNFRSF6 and TNFRSF1A. Interacts with CHEK1. Interacts with NKX3-1. In terms of tissue distribution, expressed in pancreatic islets, within both beta cells and non-beta cells (at protein level). Highly expressed in adult testis; expressed in all types of spermatogonia. Also expressed in the prostate of neonatal mice.

It is found in the cytoplasm. The protein localises to the nucleus. The protein operates within protein modification; protein ubiquitination. With respect to regulation, activity of the CRL2(FEM1B) complex toward FNIP1 is inhibited by BEX family proteins (BEX1, BEX2, BEX3 and/or BEX4) in absence of reductive stress. Mechanistically, BEX proteins act as pseudosubstrate inhibitors that associate with FEM1B via zinc in absence of reductive stress, thereby preventing association between FEM1B and FNIP1. Functionally, substrate-recognition component of a Cul2-RING (CRL2) E3 ubiquitin-protein ligase complex of the DesCEND (destruction via C-end degrons) pathway, which recognizes a C-degron located at the extreme C terminus of target proteins, leading to their ubiquitination and degradation. The C-degron recognized by the DesCEND pathway is usually a motif of less than ten residues and can be present in full-length proteins, truncated proteins or proteolytically cleaved forms. The CRL2(FEM1B) complex specifically recognizes proteins ending with -Gly-Leu-Asp-Arg, such as CDK5R1, leading to their ubiquitination and degradation. Also acts as a regulator of the reductive stress response by mediating ubiquitination of reduced FNIP1: in response to reductive stress, the CRL2(FEM1B) complex specifically recognizes a conserved Cys degron in FNIP1 when this degron is reduced, leading to FNIP1 degradation and subsequent activation of mitochondria to recalibrate reactive oxygen species (ROS). Mechanistically, recognizes and binds reduced FNIP1 through two interface zinc ions, which act as a molecular glue that recruit reduced FNIP1 to FEM1B. Promotes ubiquitination of GLI1, suppressing GLI1 transcriptional activator activity. Promotes ubiquitination and degradation of ANKRD37. Promotes ubiquitination and degradation of SLBP. Involved in apoptosis by acting as a death receptor-associated protein that mediates apoptosis. Also involved in glucose homeostasis in pancreatic islet. May also act as an adapter/mediator in replication stress-induced signaling that leads to the activation of CHEK1. The polypeptide is Protein fem-1 homolog B (Mus musculus (Mouse)).